The following is a 63-amino-acid chain: Large ribosomal subunit protein bL35 (63 aa).

Belongs to the bacterial ribosomal protein bL35 family.

The sequence is that of Large ribosomal subunit protein bL35 from Thermobifida fusca (strain YX).